A 168-amino-acid chain; its full sequence is Photosystem I assembly protein Ycf3 (168 aa).

TPR repeat units lie at residues alanine 35 to proline 68, serine 72 to leucine 105, and glycine 120 to asparagine 153.

This sequence belongs to the Ycf3 family.

The protein localises to the plastid. It localises to the chloroplast thylakoid membrane. Essential for the assembly of the photosystem I (PSI) complex. May act as a chaperone-like factor to guide the assembly of the PSI subunits. The polypeptide is Photosystem I assembly protein Ycf3 (Solanum bulbocastanum (Wild potato)).